The sequence spans 343 residues: Anthranilate phosphoribosyltransferase (343 aa).

5-phospho-alpha-D-ribose 1-diphosphate is bound by residues Gly84, 87 to 88 (GD), Thr92, 94 to 97 (NIST), 112 to 120 (KHGNRGVSS), and Ser124. Gly84 contacts anthranilate. Position 96 (Ser96) interacts with Mg(2+). Asn115 provides a ligand contact to anthranilate. Arg170 provides a ligand contact to anthranilate. Positions 229 and 230 each coordinate Mg(2+).

The protein belongs to the anthranilate phosphoribosyltransferase family. Homodimer. Mg(2+) serves as cofactor.

The enzyme catalyses N-(5-phospho-beta-D-ribosyl)anthranilate + diphosphate = 5-phospho-alpha-D-ribose 1-diphosphate + anthranilate. It participates in amino-acid biosynthesis; L-tryptophan biosynthesis; L-tryptophan from chorismate: step 2/5. Catalyzes the transfer of the phosphoribosyl group of 5-phosphorylribose-1-pyrophosphate (PRPP) to anthranilate to yield N-(5'-phosphoribosyl)-anthranilate (PRA). This chain is Anthranilate phosphoribosyltransferase, found in Burkholderia vietnamiensis (strain G4 / LMG 22486) (Burkholderia cepacia (strain R1808)).